Here is a 190-residue protein sequence, read N- to C-terminus: Potassium-transporting ATPase KdpC subunit (190 aa).

A helical transmembrane segment spans residues 10 to 30 (TFIFLLLITGGVYPLLTTVLG).

The protein belongs to the KdpC family. In terms of assembly, the system is composed of three essential subunits: KdpA, KdpB and KdpC.

It is found in the cell inner membrane. Its function is as follows. Part of the high-affinity ATP-driven potassium transport (or Kdp) system, which catalyzes the hydrolysis of ATP coupled with the electrogenic transport of potassium into the cytoplasm. This subunit acts as a catalytic chaperone that increases the ATP-binding affinity of the ATP-hydrolyzing subunit KdpB by the formation of a transient KdpB/KdpC/ATP ternary complex. The sequence is that of Potassium-transporting ATPase KdpC subunit from Shigella dysenteriae serotype 1 (strain Sd197).